The primary structure comprises 258 residues: Homeobox protein VENTX (258 aa).

The span at 1-32 shows a compositional bias: polar residues; the sequence is MRLSSSPPRGPQQLSSFGSVDWLSQSSCSGPT. 2 disordered regions span residues 1 to 93 and 227 to 248; these read MRLS…RAPR and SHPPTPGRPSLGPALSTGPRGL. The homeobox DNA-binding region spans 91–150; sequence APRVRTAFTMEQVRTLEGVFQHHQYLSPLERKRLAREMQLSEVQIKTWFQNRRMKHKRQM.

Expressed in bone marrow of patients recovering from chemotherapy. Also expressed in an erythroleukemia cell line.

It localises to the nucleus. Its function is as follows. May be involved in ventralization. The polypeptide is Homeobox protein VENTX (VENTX) (Homo sapiens (Human)).